We begin with the raw amino-acid sequence, 434 residues long: MKVLSALCVLLVSVATAKQQLSELQYRNAFTNWMIAHQRHYSSEEFNGRFNIFKANMDYINEWNTKGSETVLGLNVFADITNEEYRATYLGTPFDASSLEMTPSEKVFGGVQANSVDWRAKGAVTPIKNQGECGGCWSFSATGATEGAQYIANGDSDLTSVSEQQLIDCSGSYGNNGCEGGLMTLAFEYIINNGGIDTESSYPFTANTEKCKYNPSNIGAELSSYVNVTSGSESDLAAKVTQGPTSVAIDASQPSFQFYSSGIYNEPACSSTQLDHGVLAVGFGSGSSGSQSQSAGSQSQSSNNNWSESSQSQDSNSWSQSSQSQSSQDSNSWSQSSQSQGSNSFTGAGTGSGSGSVSGSGSASGSSSFSGSSNGGNSNSGDYPTDGNYWIVKNSWGLDWGINGYILMSKDKDNQCGIATMASIPQAIPKSKWN.

The first 19 residues, 1–19 (MKVLSALCVLLVSVATAKQ), serve as a signal peptide directing secretion. The propeptide at 20-113 (QLSELQYRNA…SEKVFGGVQA (94 aa)) is activation peptide. Cystine bridges form between Cys-133/Cys-178 and Cys-169/Cys-211. Cys-136 is an active-site residue. Asn-227 carries N-linked (GlcNAc...) asparagine glycosylation. Cys-269 and Cys-416 are disulfide-bonded. His-276 is an active-site residue. The disordered stretch occupies residues 285-384 (SGSSGSQSQS…GGNSNSGDYP (100 aa)). Residues 288-347 (SGSQSQSAGSQSQSSNNNWSESSQSQDSNSWSQSSQSQSSQDSNSWSQSSQSQGSNSFTG) show a composition bias toward low complexity. Asn-305 carries an N-linked (GlcNAc...) asparagine glycan. Positions 348-358 (AGTGSGSGSVS) are enriched in gly residues. A compositionally biased stretch (low complexity) spans 359-381 (GSGSASGSSSFSGSSNGGNSNSG). The active site involves Asn-394.

This sequence belongs to the peptidase C1 family.

The protein resides in the lysosome. The sequence is that of Cysteine proteinase 6 (cprF) from Dictyostelium discoideum (Social amoeba).